The primary structure comprises 493 residues: Gamma-aminobutyric acid receptor subunit alpha-3 (493 aa).

The N-terminal stretch at methionine 1–glycine 28 is a signal peptide. Positions threonine 27–proline 54 are disordered. Residues glutamine 29–glycine 276 are Extracellular-facing. Positions glutamate 31–lysine 42 are enriched in basic and acidic residues. Asparagine 63 is a glycosylation site (N-linked (GlcNAc...) asparagine). 4-aminobutanoate is bound at residue arginine 119. 2 N-linked (GlcNAc...) asparagine glycosylation sites follow: asparagine 163 and asparagine 176. A 4-aminobutanoate-binding site is contributed by threonine 182. A disulfide bridge links cysteine 191 with cysteine 205. A glycan (N-linked (GlcNAc...) asparagine) is linked at asparagine 228. 3 helical membrane-spanning segments follow: residues tyrosine 277 to tryptophan 298, valine 304 to alanine 325, and methionine 338 to valine 359. The Cytoplasmic portion of the chain corresponds to asparagine 360–lysine 458. Position 427 is a phosphoserine (serine 427). Threonine 428 carries the post-translational modification Phosphothreonine. 2 positions are modified to phosphoserine: serine 434 and serine 443. Residues isoleucine 459 to valine 480 form a helical membrane-spanning segment.

This sequence belongs to the ligand-gated ion channel (TC 1.A.9) family. Gamma-aminobutyric acid receptor (TC 1.A.9.5) subfamily. GABRA3 sub-subfamily. As to quaternary structure, heteropentamer, formed by a combination of alpha (GABRA1-6), beta (GABRB1-3), gamma (GABRG1-3), delta (GABRD), epsilon (GABRE), rho (GABRR1-3), pi (GABRP) and theta (GABRQ) chains, each subunit exhibiting distinct physiological and pharmacological properties. Binds UBQLN1. Interacts with GPHN. Expressed in most brain regions. Expressed in lungs, in alveolar epithelium.

Its subcellular location is the postsynaptic cell membrane. It is found in the cell membrane. The enzyme catalyses chloride(in) = chloride(out). Alpha subunit of the heteropentameric ligand-gated chloride channel gated by gamma-aminobutyric acid (GABA), a major inhibitory neurotransmitter in the brain. GABA-gated chloride channels, also named GABA(A) receptors (GABAAR), consist of five subunits arranged around a central pore and contain GABA active binding site(s) located at the alpha and beta subunit interface(s). When activated by GABA, GABAARs selectively allow the flow of chloride anions across the cell membrane down their electrochemical gradient. Chloride influx into the postsynaptic neuron following GABAAR opening decreases the neuron ability to generate a new action potential, thereby reducing nerve transmission. The chain is Gamma-aminobutyric acid receptor subunit alpha-3 from Rattus norvegicus (Rat).